Here is a 355-residue protein sequence, read N- to C-terminus: Protein RecA (355 aa).

72-79 (GPESSGKT) is an ATP binding site.

This sequence belongs to the RecA family.

It is found in the cytoplasm. Its function is as follows. Can catalyze the hydrolysis of ATP in the presence of single-stranded DNA, the ATP-dependent uptake of single-stranded DNA by duplex DNA, and the ATP-dependent hybridization of homologous single-stranded DNAs. It interacts with LexA causing its activation and leading to its autocatalytic cleavage. The chain is Protein RecA from Wolbachia pipientis subsp. Culex pipiens (strain wPip).